The following is a 1479-amino-acid chain: Tyrosine-protein kinase BAZ1B (1479 aa).

The WAC domain occupies 20–126; that stretch reads EPLFTIPHTQ…GEECDFEVGK (107 aa). The tract at residues 146–212 is disordered; that stretch reads EAVEKKSDGA…TSLKKGERKW (67 aa). 2 stretches are compositionally biased toward basic and acidic residues: residues 148-165 and 173-195; these read VEKKSDGACDSPSSDKEN and LQKKETVVKEDEGRRESINDRAR. Phosphoserine occurs at positions 152, 158, and 161. Residues 207 to 213 carry the C motif motif; that stretch reads KGERKWA. T266 bears the Phosphothreonine mark. Residues 302–333 are disordered; the sequence is NPSTKRRNTGSPDRKPSKKPKRDSSSLSSPLN. Phosphoserine is present on residues S325, S330, S345, S361, and S374. 2 disordered regions span residues 376–433 and 448–472; these read NNNK…KTPK and TQKMTRTPRSSGGVPRSSGKPHKHL. A compositionally biased stretch (basic residues) spans 381 to 396; that stretch reads HSFHIPKKGPAAKKPG. Polar residues predominate over residues 415 to 425; sequence GQKSTGNSKSP. The span at 454 to 465 shows a compositional bias: low complexity; that stretch reads TPRSSGGVPRSS. Positions 537 to 587 form a coiled coil; that stretch reads ASMSEEQRKEYLKKKRQELKERLREKAKERREREMLERLEKQKRFEDQELG. Positions 605 to 669 constitute a DDT domain; sequence NTLFGDVALV…LQTLLQDEIA (65 aa). S706, S709, and S717 each carry phosphoserine. The stretch at 774 to 809 forms a coiled coil; that stretch reads SAELWKERLAVLKEENDKKRAEKQKRKEMEARNKEN. Positions 789–813 are disordered; the sequence is NDKKRAEKQKRKEMEARNKENGKEE. K827 is covalently cross-linked (Glycyl lysine isopeptide (Lys-Gly) (interchain with G-Cter in SUMO1); alternate). K827 is covalently cross-linked (Glycyl lysine isopeptide (Lys-Gly) (interchain with G-Cter in SUMO2); alternate). Residues K854, K1043, K1089, and K1107 each participate in a glycyl lysine isopeptide (Lys-Gly) (interchain with G-Cter in SUMO2) cross-link. The stretch at 854 to 890 forms a coiled coil; that stretch reads KRKREIQERETKVRLEREAEEERMRKHKAAAEKAFQE. A PHD-type zinc finger spans residues 1184–1234; the sequence is NARCKVCRKKGEDDKLILCDECNKAFHLFCLRPALYEVPDGEWQCPACQPP. Residues 1231–1324 form a disordered region; that stretch reads CQPPTARRNS…SRPKDDPEVD (94 aa). Over residues 1254–1277 the composition is skewed to acidic residues; it reads SEGDESGEEEEEEEEEEEEEEDYE. Residues 1257 to 1284 adopt a coiled-coil conformation; it reads DESGEEEEEEEEEEEEEEDYEVAGLRLR. Positions 1305 to 1316 are enriched in basic residues; sequence PGKKSHPARRSR. Residue S1315 is modified to Phosphoserine. K1331 bears the N6-acetyllysine mark. The region spanning 1335-1439 is the Bromo domain; the sequence is RRQSLELQKC…QCLLALLQKH (105 aa). Phosphoserine occurs at positions 1338, 1464, 1466, and 1468. The tract at residues 1451–1479 is disordered; it reads RKFPDRLADDEGDSDSESVGQSRGRRQKK.

It belongs to the WAL family. BAZ1B subfamily. As to quaternary structure, component of the WICH-1 ISWI chromatin remodeling complex, at least composed of SMARCA1 and BAZ1B/WSTF, which regulates the spacing of histone octamers on the DNA template to facilitate access to DNA. Within the WICH-1 ISWI chromatin remodeling complex interacts with SMARCA1; the interaction is direct. Component of the WICH-5 ISWI chromatin remodeling complex (also called the WICH complex), at least composed of SMARCA5/SNF2H and BAZ1B/WSTF, which regulates the spacing of histone octamers on the DNA template to facilitate access to DNA. Within the WICH-5 ISWI chromatin remodeling complex interacts with SMARCA5/SNF2H; the interaction is direct. Component of the B-WICH chromatin remodeling complex, at least composed of SMARCA5/SNF2H, BAZ1B/WSTF, SF3B1, DEK, MYO1C, ERCC6, MYBBP1A and DDX21. Within the B-WICH chromatin remodeling complex, interacts with SMARCA5/SNF2H, DDX21, DEK, MYBBP1A, SF3B1 and ERCC6. Interacts with MYO1C. Interacts with PCNA; the interaction is direct and is required for BAZ1B/WSTF binding to replication foci during S phase. Interacts with CDT1. The cofactor is Mn(2+).

The protein localises to the nucleus. The catalysed reaction is L-tyrosyl-[protein] + ATP = O-phospho-L-tyrosyl-[protein] + ADP + H(+). Atypical tyrosine-protein kinase that plays a central role in chromatin remodeling and acts as a transcription regulator. Involved in DNA damage response by phosphorylating 'Tyr-142' of histone H2AX (H2AXY142ph). H2AXY142ph plays a central role in DNA repair and acts as a mark that distinguishes between apoptotic and repair responses to genotoxic stress. Regulatory subunit of the ATP-dependent WICH-1 and WICH-5 ISWI chromatin remodeling complexes, which form ordered nucleosome arrays on chromatin and facilitate access to DNA during DNA-templated processes such as DNA replication, transcription, and repair. Both complexes regulate the spacing of nucleosomes along the chromatin and have the ability to slide mononucleosomes to the center of a DNA template. The WICH-1 ISWI chromatin remodeling complex has a lower ATP hydrolysis rate than the WICH-5 ISWI chromatin remodeling complex. The WICH-5 ISWI chromatin remodeling complex regulates the transcription of various genes, has a role in RNA polymerase I transcription. Within the B-WICH complex has a role in RNA polymerase III transcription. Mediates the recruitment of the WICH-5 ISWI chromatin remodeling complex to replication foci during DNA replication. The protein is Tyrosine-protein kinase BAZ1B (Baz1b) of Mus musculus (Mouse).